An 88-amino-acid chain; its full sequence is Putative membrane protein insertion efficiency factor (88 aa).

A disordered region spans residues 66–88; it reads DFVPPKKEKNADSEHSCKAHHHH. Positions 69–82 are enriched in basic and acidic residues; it reads PPKKEKNADSEHSC.

The protein belongs to the UPF0161 family.

It is found in the cell membrane. Could be involved in insertion of integral membrane proteins into the membrane. In Listeria monocytogenes serotype 4b (strain CLIP80459), this protein is Putative membrane protein insertion efficiency factor.